A 255-amino-acid chain; its full sequence is MNFIVVIPARFASSRLPGKPLADIAGKPMIQWVYERAKLSDASKVIVATDNQQVFDTVKEFGGEVLMTSPKHESGTDRLQEVAQQLGLAKDEIIVNVQGDEPLIPPAVINQVAANIQGNSWASAATLSEPLVESEMVFDPNAVKVVSDVNGAALYFSRAPIPWYRDEYQQPVSQVAPRTDGLVQRHIGIYAYKVNLLNQFVQWPMSALEAVEKLEQLRILSNGKKIHIAPSCELVPGGVDTQADLDRVRAKLKSS.

The protein belongs to the KdsB family.

It localises to the cytoplasm. The enzyme catalyses 3-deoxy-alpha-D-manno-oct-2-ulosonate + CTP = CMP-3-deoxy-beta-D-manno-octulosonate + diphosphate. It participates in nucleotide-sugar biosynthesis; CMP-3-deoxy-D-manno-octulosonate biosynthesis; CMP-3-deoxy-D-manno-octulosonate from 3-deoxy-D-manno-octulosonate and CTP: step 1/1. It functions in the pathway bacterial outer membrane biogenesis; lipopolysaccharide biosynthesis. Activates KDO (a required 8-carbon sugar) for incorporation into bacterial lipopolysaccharide in Gram-negative bacteria. This chain is 3-deoxy-manno-octulosonate cytidylyltransferase, found in Saccharophagus degradans (strain 2-40 / ATCC 43961 / DSM 17024).